A 91-amino-acid chain; its full sequence is Small ribosomal subunit protein uS19 (91 aa).

It belongs to the universal ribosomal protein uS19 family.

In terms of biological role, protein S19 forms a complex with S13 that binds strongly to the 16S ribosomal RNA. The protein is Small ribosomal subunit protein uS19 of Saccharophagus degradans (strain 2-40 / ATCC 43961 / DSM 17024).